Reading from the N-terminus, the 435-residue chain is Methylenetetrahydrofolate--tRNA-(uracil-5-)-methyltransferase TrmFO (435 aa).

9 to 14 (GAGLAG) is a binding site for FAD.

Belongs to the MnmG family. TrmFO subfamily. Requires FAD as cofactor.

It is found in the cytoplasm. It catalyses the reaction uridine(54) in tRNA + (6R)-5,10-methylene-5,6,7,8-tetrahydrofolate + NADH + H(+) = 5-methyluridine(54) in tRNA + (6S)-5,6,7,8-tetrahydrofolate + NAD(+). It carries out the reaction uridine(54) in tRNA + (6R)-5,10-methylene-5,6,7,8-tetrahydrofolate + NADPH + H(+) = 5-methyluridine(54) in tRNA + (6S)-5,6,7,8-tetrahydrofolate + NADP(+). Its function is as follows. Catalyzes the folate-dependent formation of 5-methyl-uridine at position 54 (M-5-U54) in all tRNAs. In Staphylococcus aureus (strain JH1), this protein is Methylenetetrahydrofolate--tRNA-(uracil-5-)-methyltransferase TrmFO.